Consider the following 395-residue polypeptide: Ribosomal RNA small subunit methyltransferase H (395 aa).

Residues G101–H103, D120, Y147, D171, and Q178 contribute to the S-adenosyl-L-methionine site.

It belongs to the methyltransferase superfamily. RsmH family.

The protein resides in the cytoplasm. It catalyses the reaction cytidine(1402) in 16S rRNA + S-adenosyl-L-methionine = N(4)-methylcytidine(1402) in 16S rRNA + S-adenosyl-L-homocysteine + H(+). In terms of biological role, specifically methylates the N4 position of cytidine in position 1402 (C1402) of 16S rRNA. The chain is Ribosomal RNA small subunit methyltransferase H from Mycobacterium marinum (strain ATCC BAA-535 / M).